A 252-amino-acid polypeptide reads, in one-letter code: UPF0714 protein YndL (252 aa).

Residues 33 to 51 (IVKLLMIFMVFTPISSIYA) traverse the membrane as a helical segment.

It belongs to the UPF0714 family.

The protein resides in the cell membrane. This Bacillus subtilis (strain 168) protein is UPF0714 protein YndL (yndL).